The chain runs to 152 residues: 6,7-dimethyl-8-ribityllumazine synthase (152 aa).

5-amino-6-(D-ribitylamino)uracil contacts are provided by residues phenylalanine 21, 55–57 (AFE), and 79–81 (AVI). (2S)-2-hydroxy-3-oxobutyl phosphate is bound at residue 84-85 (AT). Histidine 87 acts as the Proton donor in catalysis. A 5-amino-6-(D-ribitylamino)uracil-binding site is contributed by phenylalanine 112. Position 126 (arginine 126) interacts with (2S)-2-hydroxy-3-oxobutyl phosphate.

It belongs to the DMRL synthase family. In terms of assembly, forms an icosahedral capsid composed of 60 subunits, arranged as a dodecamer of pentamers.

It catalyses the reaction (2S)-2-hydroxy-3-oxobutyl phosphate + 5-amino-6-(D-ribitylamino)uracil = 6,7-dimethyl-8-(1-D-ribityl)lumazine + phosphate + 2 H2O + H(+). It functions in the pathway cofactor biosynthesis; riboflavin biosynthesis; riboflavin from 2-hydroxy-3-oxobutyl phosphate and 5-amino-6-(D-ribitylamino)uracil: step 1/2. Functionally, catalyzes the formation of 6,7-dimethyl-8-ribityllumazine by condensation of 5-amino-6-(D-ribitylamino)uracil with 3,4-dihydroxy-2-butanone 4-phosphate. This is the penultimate step in the biosynthesis of riboflavin. The sequence is that of 6,7-dimethyl-8-ribityllumazine synthase from Exiguobacterium sibiricum (strain DSM 17290 / CCUG 55495 / CIP 109462 / JCM 13490 / 255-15).